We begin with the raw amino-acid sequence, 132 residues long: Fatty acid-binding protein 12 (132 aa).

A fatty acid contacts are provided by residues Arg-107 and 127–129 (RTY).

It belongs to the calycin superfamily. Fatty-acid binding protein (FABP) family. In terms of tissue distribution, highly expressed in adult retina and testis with lower levels in cerebral cortex, kidney and epididymis. In the retina, strongly expressed in the ganglion cell layer and throughout the inner nuclear layer in amacrine and bipolar cells. Not expressed in the outer nuclear layer. In the testis, detected in the seminiferous tubules.

Functionally, may play a role in lipid transport. In Rattus norvegicus (Rat), this protein is Fatty acid-binding protein 12.